The chain runs to 121 residues: Large ribosomal subunit protein bL12 (121 aa).

This sequence belongs to the bacterial ribosomal protein bL12 family. As to quaternary structure, homodimer. Part of the ribosomal stalk of the 50S ribosomal subunit. Forms a multimeric L10(L12)X complex, where L10 forms an elongated spine to which 2 to 4 L12 dimers bind in a sequential fashion. Binds GTP-bound translation factors.

Forms part of the ribosomal stalk which helps the ribosome interact with GTP-bound translation factors. Is thus essential for accurate translation. The polypeptide is Large ribosomal subunit protein bL12 (Clostridium perfringens (strain 13 / Type A)).